A 546-amino-acid polypeptide reads, in one-letter code: CTP synthase (546 aa).

Positions 1-269 (MNSNTKIIFV…DAKLVELLNL (269 aa)) are amidoligase domain. S16 provides a ligand contact to CTP. S16 serves as a coordination point for UTP. Residues 17-22 (SLGKGV) and D74 each bind ATP. The Mg(2+) site is built by D74 and E143. Residues 150 to 152 (DIE), 190 to 195 (KTKPTQ), and K226 contribute to the CTP site. Residues 190-195 (KTKPTQ) and K226 contribute to the UTP site. The region spanning 294 to 546 (IIAMVGKYVS…IQAAIENSNN (253 aa)) is the Glutamine amidotransferase type-1 domain. G356 lines the L-glutamine pocket. The active-site Nucleophile; for glutamine hydrolysis is C383. L-glutamine-binding positions include 384-387 (LGMQ), E407, and R474. Catalysis depends on residues H519 and E521.

Belongs to the CTP synthase family. As to quaternary structure, homotetramer.

The enzyme catalyses UTP + L-glutamine + ATP + H2O = CTP + L-glutamate + ADP + phosphate + 2 H(+). It catalyses the reaction L-glutamine + H2O = L-glutamate + NH4(+). The catalysed reaction is UTP + NH4(+) + ATP = CTP + ADP + phosphate + 2 H(+). Its pathway is pyrimidine metabolism; CTP biosynthesis via de novo pathway; CTP from UDP: step 2/2. Its activity is regulated as follows. Allosterically activated by GTP, when glutamine is the substrate; GTP has no effect on the reaction when ammonia is the substrate. The allosteric effector GTP functions by stabilizing the protein conformation that binds the tetrahedral intermediate(s) formed during glutamine hydrolysis. Inhibited by the product CTP, via allosteric rather than competitive inhibition. Functionally, catalyzes the ATP-dependent amination of UTP to CTP with either L-glutamine or ammonia as the source of nitrogen. Regulates intracellular CTP levels through interactions with the four ribonucleotide triphosphates. The sequence is that of CTP synthase from Francisella tularensis subsp. holarctica (strain FTNF002-00 / FTA).